The following is a 142-amino-acid chain: Neuritin (142 aa).

The first 27 residues, Met-1–Ala-27, serve as a signal peptide directing secretion. The GPI-anchor amidated glycine moiety is linked to residue Gly-116. Residues Ala-117–Phe-142 constitute a propeptide, removed in mature form.

It belongs to the neuritin family. Component of the outer core of AMPAR complex. AMPAR complex consists of an inner core made of 4 pore-forming GluA/GRIA proteins (GRIA1, GRIA2, GRIA3 and GRIA4) and 4 major auxiliary subunits arranged in a twofold symmetry. One of the two pairs of distinct binding sites is occupied either by CNIH2, CNIH3 or CACNG2, CACNG3. The other harbors CACNG2, CACNG3, CACNG4, CACNG8 or GSG1L. This inner core of AMPAR complex is complemented by outer core constituents binding directly to the GluA/GRIA proteins at sites distinct from the interaction sites of the inner core constituents. Outer core constituents include at least PRRT1, PRRT2, CKAMP44/SHISA9, FRRS1L and NRN1. The proteins of the inner and outer core serve as a platform for other, more peripherally associated AMPAR constituents. Alone or in combination, these auxiliary subunits control the gating and pharmacology of the AMPAR complex and profoundly impact their biogenesis and protein processing.

It localises to the cell membrane. Its subcellular location is the synapse. Promotes neurite outgrowth and especially branching of neuritic processes in primary hippocampal and cortical cells. The polypeptide is Neuritin (NRN1) (Homo sapiens (Human)).